The following is a 92-amino-acid chain: Small ribosomal subunit protein uS19 (92 aa).

Belongs to the universal ribosomal protein uS19 family.

Protein S19 forms a complex with S13 that binds strongly to the 16S ribosomal RNA. The protein is Small ribosomal subunit protein uS19 of Rhizobium johnstonii (strain DSM 114642 / LMG 32736 / 3841) (Rhizobium leguminosarum bv. viciae).